The chain runs to 281 residues: Probable endonuclease 4 (281 aa).

Residues His-70, His-110, Glu-146, Asp-180, His-183, His-217, Asp-230, His-232, and Glu-262 each contribute to the Zn(2+) site.

It belongs to the AP endonuclease 2 family. Zn(2+) is required as a cofactor.

The catalysed reaction is Endonucleolytic cleavage to 5'-phosphooligonucleotide end-products.. Functionally, endonuclease IV plays a role in DNA repair. It cleaves phosphodiester bonds at apurinic or apyrimidinic (AP) sites, generating a 3'-hydroxyl group and a 5'-terminal sugar phosphate. This chain is Probable endonuclease 4, found in Nitratiruptor sp. (strain SB155-2).